Reading from the N-terminus, the 331-residue chain is Glyoxylate reductase (331 aa).

NADP(+) is bound by residues 158–161 (FGRI), 180–182 (SRT), and 239–241 (TSR). Active-site residues include Arg241 and Glu270. Residue His288 is the Proton donor of the active site. 288-290 (HIG) contacts NADP(+).

This sequence belongs to the D-isomer specific 2-hydroxyacid dehydrogenase family. GyaR subfamily. As to quaternary structure, homodimer.

The protein localises to the cytoplasm. The enzyme catalyses glycolate + NAD(+) = glyoxylate + NADH + H(+). The polypeptide is Glyoxylate reductase (Thermococcus litoralis (strain ATCC 51850 / DSM 5473 / JCM 8560 / NS-C)).